The chain runs to 157 residues: ATP synthase subunit b (157 aa).

A helical membrane pass occupies residues 7 to 29 (LVSQAIAFSIFIWFTTKFVWPYL).

The protein belongs to the ATPase B chain family. As to quaternary structure, F-type ATPases have 2 components, F(1) - the catalytic core - and F(0) - the membrane proton channel. F(1) has five subunits: alpha(3), beta(3), gamma(1), delta(1), epsilon(1). F(0) has three main subunits: a(1), b(2) and c(10-14). The alpha and beta chains form an alternating ring which encloses part of the gamma chain. F(1) is attached to F(0) by a central stalk formed by the gamma and epsilon chains, while a peripheral stalk is formed by the delta and b chains.

It localises to the cell inner membrane. Functionally, f(1)F(0) ATP synthase produces ATP from ADP in the presence of a proton or sodium gradient. F-type ATPases consist of two structural domains, F(1) containing the extramembraneous catalytic core and F(0) containing the membrane proton channel, linked together by a central stalk and a peripheral stalk. During catalysis, ATP synthesis in the catalytic domain of F(1) is coupled via a rotary mechanism of the central stalk subunits to proton translocation. Component of the F(0) channel, it forms part of the peripheral stalk, linking F(1) to F(0). The protein is ATP synthase subunit b of Nitrosomonas eutropha (strain DSM 101675 / C91 / Nm57).